The chain runs to 626 residues: (R)-linalool synthase 2, chloroplastic (626 aa).

Residues 1 to 21 constitute a chloroplast transit peptide; it reads MAFVSIAPLASRCCVHKSFVS. Mg(2+) contacts are provided by Asp-377, Asp-381, and Glu-529. Residues 377–381 carry the DDXXD motif motif; that stretch reads DDIYD.

This sequence belongs to the terpene synthase family. Tpsd subfamily. Requires Mg(2+) as cofactor. Mn(2+) serves as cofactor.

The protein localises to the plastid. It localises to the chloroplast. It carries out the reaction (2E)-geranyl diphosphate + H2O = (R)-linalool + diphosphate. It functions in the pathway terpene metabolism; oleoresin biosynthesis. Functionally, terpene synthase (mono-TPS) involved in the biosynthesis of monoterpene natural products included in conifer oleoresin secretions and volatile emissions; these compounds contribute to biotic and abiotic stress defense against herbivores and pathogens. Catalyzes the conversion of (2E)-geranyl diphosphate (GPP) to (R)-linalool. The chain is (R)-linalool synthase 2, chloroplastic from Picea sitchensis (Sitka spruce).